A 110-amino-acid polypeptide reads, in one-letter code: UPF0060 membrane protein PBPRB0495 (110 aa).

A run of 4 helical transmembrane segments spans residues 7–27, 33–53, 63–83, and 85–105; these read VGLF…PYLW, TIWL…LLTL, AAYG…VDGI, and PTVW…IIMF.

It belongs to the UPF0060 family.

It is found in the cell inner membrane. This chain is UPF0060 membrane protein PBPRB0495, found in Photobacterium profundum (strain SS9).